The following is a 152-amino-acid chain: Ribonuclease H (152 aa).

Residues Lys6–Ala147 form the RNase H type-1 domain. 4 residues coordinate Mg(2+): Asp15, Glu53, Asp75, and Asp139.

This sequence belongs to the RNase H family. Monomer. Mg(2+) is required as a cofactor.

Its subcellular location is the cytoplasm. The catalysed reaction is Endonucleolytic cleavage to 5'-phosphomonoester.. Functionally, endonuclease that specifically degrades the RNA of RNA-DNA hybrids. This Francisella philomiragia subsp. philomiragia (strain ATCC 25017 / CCUG 19701 / FSC 153 / O#319-036) protein is Ribonuclease H.